The primary structure comprises 84 residues: MALLDYLLGQKKKKSANLAKDRLQILLAHERSERSAPEYLPKMREEILAVISKYVTIDQEQLQISIDEANGFEVLELNLVLPDK.

This sequence belongs to the MinE family.

Its function is as follows. Prevents the cell division inhibition by proteins MinC and MinD at internal division sites while permitting inhibition at polar sites. This ensures cell division at the proper site by restricting the formation of a division septum at the midpoint of the long axis of the cell. In Hydrogenovibrio crunogenus (strain DSM 25203 / XCL-2) (Thiomicrospira crunogena), this protein is Cell division topological specificity factor.